A 143-amino-acid chain; its full sequence is Large ribosomal subunit protein uL11 (143 aa).

It belongs to the universal ribosomal protein uL11 family. In terms of assembly, part of the ribosomal stalk of the 50S ribosomal subunit. Interacts with L10 and the large rRNA to form the base of the stalk. L10 forms an elongated spine to which L12 dimers bind in a sequential fashion forming a multimeric L10(L12)X complex. In terms of processing, one or more lysine residues are methylated.

In terms of biological role, forms part of the ribosomal stalk which helps the ribosome interact with GTP-bound translation factors. This is Large ribosomal subunit protein uL11 from Leptothrix cholodnii (strain ATCC 51168 / LMG 8142 / SP-6) (Leptothrix discophora (strain SP-6)).